The chain runs to 336 residues: D-alanine--D-alanine ligase (336 aa).

Residues 124–330 (KMWFSALGIP…FATFLEQAIL (207 aa)) enclose the ATP-grasp domain. 154–209 (AFDEWGSVFIKAASQGSSVGCFPAHRREDIPGLVRKAFEYAPFVVVEKTIKARELE) contacts ATP. Residues aspartate 284, glutamate 297, and asparagine 299 each contribute to the Mg(2+) site.

Belongs to the D-alanine--D-alanine ligase family. It depends on Mg(2+) as a cofactor. Mn(2+) is required as a cofactor.

The protein localises to the cytoplasm. The enzyme catalyses 2 D-alanine + ATP = D-alanyl-D-alanine + ADP + phosphate + H(+). The protein operates within cell wall biogenesis; peptidoglycan biosynthesis. In terms of biological role, cell wall formation. The sequence is that of D-alanine--D-alanine ligase from Shewanella amazonensis (strain ATCC BAA-1098 / SB2B).